A 299-amino-acid polypeptide reads, in one-letter code: Taste receptor type 2 member 5 (299 aa).

M1 is a topological domain (extracellular). Residues 2 to 22 (LSAGLGLLMLVAVVEFLIGLI) form a helical membrane-spanning segment. Over 23 to 45 (GNGVLVVWSFREWIRKFSWSSYN) the chain is Cytoplasmic. A helical transmembrane segment spans residues 46–66 (LIILGLAGCRFVLQWLIILDL). Topologically, residues 67–82 (SLFPLFQSSRWLRYLS) are extracellular. A helical transmembrane segment spans residues 83–103 (IFWVLVSQASLWFATFLSVFY). At 104–127 (CKKITTFDHPAYLWLKQRAYNLSL) the chain is on the cytoplasmic side. A helical transmembrane segment spans residues 128–148 (WCLLGYFIINLLLTVQIGLMF). The Extracellular portion of the chain corresponds to 149–175 (YHPPQGNSSIRYPFESWQYLYAFRLNS). N155 carries N-linked (GlcNAc...) asparagine glycosylation. The helical transmembrane segment at 176-196 (GSYLPLMVFLVSSGMLIVSLY) threads the bilayer. At 197–223 (THHKKMKVHSAGRRDVRAKAHITALKS) the chain is on the cytoplasmic side. The chain crosses the membrane as a helical span at residues 224-244 (LGCFLLLHLVYIMASPFSIAS). Topologically, residues 245–253 (KTYPPDLTS) are extracellular. Residues 254-274 (VFIWETLMAAYPSLHSLILIM) form a helical membrane-spanning segment. The Cytoplasmic segment spans residues 275–299 (GIPRVKQTCQKILWKTVCARRCWGP).

Belongs to the G-protein coupled receptor T2R family.

It is found in the membrane. Receptor that may play a role in the perception of bitterness and is gustducin-linked. May play a role in sensing the chemical composition of the gastrointestinal content. The activity of this receptor may stimulate alpha gustducin, mediate PLC-beta-2 activation and lead to the gating of TRPM5. The protein is Taste receptor type 2 member 5 (TAS2R5) of Pan paniscus (Pygmy chimpanzee).